A 67-amino-acid chain; its full sequence is Conotoxin ArMLCL-012 (67 aa).

An N-terminal signal peptide occupies residues 1-19 (MLCLPVFIILLLLASPAAS). Residues 20–45 (NPLEKRIQSDLIRAALEDADTKNDPR) constitute a propeptide that is removed on maturation. At Cys64 the chain carries Cysteine amide.

This sequence belongs to the conotoxin T superfamily. Post-translationally, contains 2 disulfide bonds that can be either 'C1-C3, C2-C4' or 'C1-C4, C2-C3', since these disulfide connectivities have been observed for conotoxins with cysteine framework V (for examples, see AC P0DQQ7 and AC P81755). In terms of tissue distribution, expressed by the venom duct.

It is found in the secreted. The sequence is that of Conotoxin ArMLCL-012 from Conus arenatus (Sand-dusted cone).